The primary structure comprises 388 residues: 1-deoxy-D-xylulose 5-phosphate reductoisomerase (388 aa).

The NADPH site is built by T10, G11, T12, I13, R37, Q38, and N122. Residue K123 participates in 1-deoxy-D-xylulose 5-phosphate binding. E124 is a binding site for NADPH. Residue D148 coordinates Mn(2+). Positions 149, 150, 179, and 202 each coordinate 1-deoxy-D-xylulose 5-phosphate. E150 is a Mn(2+) binding site. G208 contributes to the NADPH binding site. S215, N220, K221, and E224 together coordinate 1-deoxy-D-xylulose 5-phosphate. Mn(2+) is bound at residue E224.

It belongs to the DXR family. The cofactor is Mg(2+). Requires Mn(2+) as cofactor.

It catalyses the reaction 2-C-methyl-D-erythritol 4-phosphate + NADP(+) = 1-deoxy-D-xylulose 5-phosphate + NADPH + H(+). It participates in isoprenoid biosynthesis; isopentenyl diphosphate biosynthesis via DXP pathway; isopentenyl diphosphate from 1-deoxy-D-xylulose 5-phosphate: step 1/6. Its function is as follows. Catalyzes the NADPH-dependent rearrangement and reduction of 1-deoxy-D-xylulose-5-phosphate (DXP) to 2-C-methyl-D-erythritol 4-phosphate (MEP). The polypeptide is 1-deoxy-D-xylulose 5-phosphate reductoisomerase (Laribacter hongkongensis (strain HLHK9)).